The chain runs to 236 residues: Small ribosomal subunit protein uS3 (236 aa).

The region spanning 39-107 is the KH type-2 domain; the sequence is VRQFLTKELK…PAQINISEVR (69 aa).

It belongs to the universal ribosomal protein uS3 family. As to quaternary structure, part of the 30S ribosomal subunit. Forms a tight complex with proteins S10 and S14.

In terms of biological role, binds the lower part of the 30S subunit head. Binds mRNA in the 70S ribosome, positioning it for translation. This chain is Small ribosomal subunit protein uS3, found in Aeromonas salmonicida (strain A449).